We begin with the raw amino-acid sequence, 548 residues long: WAP, Kazal, immunoglobulin, Kunitz and NTR domain-containing protein 1 (548 aa).

The N-terminal stretch at 1 to 19 (MPALRPLLPLLLLLRLTSG) is a signal peptide. In terms of domain architecture, WAP spans 26 to 79 (LGSHPGVCPNQLSPNLWVDAQSTCERECSRDQDCAAAEKCCINVCGLHSCVAAR). Intrachain disulfides connect Cys-33/Cys-66, Cys-49/Cys-70, Cys-53/Cys-65, Cys-59/Cys-75, Cys-116/Cys-146, Cys-120/Cys-139, and Cys-128/Cys-157. The 52-residue stretch at 108–159 (WDGQPVCRCRDRCEKEPSFTCASDGLTYYNRCYMDAEACLRGLHLHIVPCKH) folds into the Kazal-like domain. The tract at residues 164-184 (PPSSPGPPETTARPTPGAAPV) is disordered. Residues 186-279 (PALYSSPSPQ…GLLRADFPLS (94 aa)) form the Ig-like C2-type domain. 10 disulfides stabilise this stretch: Cys-207/Cys-263, Cys-299/Cys-351, Cys-306/Cys-334, Cys-326/Cys-347, Cys-359/Cys-409, Cys-368/Cys-392, Cys-384/Cys-405, Cys-417/Cys-489, Cys-420/Cys-491, and Cys-431/Cys-540. BPTI/Kunitz inhibitor domains lie at 299–351 (CLPD…QQAC) and 359–409 (CVLP…EDAC). In terms of domain architecture, NTR spans 409-540 (CPVPRTPPCR…ILELLEKQAC (132 aa)). An N-linked (GlcNAc...) asparagine glycan is attached at Asn-493.

Belongs to the WFIKKN family. Expressed in pancreas, kidney, liver, placenta, and lung.

The protein localises to the secreted. Protease-inhibitor that contains multiple distinct protease inhibitor domains. Probably has serine protease- and metalloprotease-inhibitor activity. This Homo sapiens (Human) protein is WAP, Kazal, immunoglobulin, Kunitz and NTR domain-containing protein 1 (WFIKKN1).